The chain runs to 189 residues: MLGSRAVMLLLLLPWTAQGRAVPGGSSPAWTQCQQLSQKLCTLAWSAHPLVGHMDLREEGDEETTNDVPHIQCGDGCDPQGLRDNSQFCLQRIHQGLIFYEKLLGSDIFTGEPSLLPDSPVGQLHASLLGLSQLLQPEGHHWETQQIPSLSPSQPWQRLLLRFKILRSLQAFVAVAARVFAHGAATLSP.

An N-terminal signal peptide occupies residues 1-19; sequence MLGSRAVMLLLLLPWTAQG. Residues Cys-77 and Cys-89 are joined by a disulfide bond.

It belongs to the IL-6 superfamily. In terms of assembly, heterodimer with IL12B; disulfide-linked. The heterodimer is known as interleukin IL-23. Interacts with IL23R; this interaction enables recruitment of IL12RB1. Secreted by activated dendritic and phagocytic cells and keratinocytes. Also expressed by dermal Langerhans cells (at protein level).

It is found in the secreted. Its function is as follows. Associates with IL12B to form the pro-inflammatory cytokine IL-23 that plays different roles in innate and adaptive immunity. Released by antigen-presenting cells such as dendritic cells or macrophages, binds to a heterodimeric receptor complex composed of IL12RB1 and IL23R to activate JAK2 and TYK2 which then phosphorylate the receptor to form a docking site leading to the phosphorylation of STAT3 and STAT4. This process leads to activation of several pathways including p38 MAPK or NF-kappa-B and promotes the production of pro-inflammatory cytokines such as interleukin-17A/IL17A. In turn, participates in the early and effective intracellular bacterial clearance. Promotes the expansion and survival of T-helper 17 cells, a CD4-positive helper T-cell subset that produces IL-17, as well as other IL-17-producing cells. The polypeptide is Interleukin-23 subunit alpha (IL23A) (Homo sapiens (Human)).